A 195-amino-acid polypeptide reads, in one-letter code: MRGRDEETGEFHDKSRSQNRRDALDVLALGEKLVSLTPAQLARLPIPEDLLPHIAECKRITAHIAHKRQLAFLAKHMRREEEATLDAIRDALDANSETGRREVAMMHRVEDWRERLLAEGDKALAALLDDYPQADRQQLRTLVRNAQAEKAKNKPPRAYREIFQVLRALMLPAALGLKASAEDADPVESDEADED.

Belongs to the DarP family.

It is found in the cytoplasm. Its function is as follows. Member of a network of 50S ribosomal subunit biogenesis factors which assembles along the 30S-50S interface, preventing incorrect 23S rRNA structures from forming. Promotes peptidyl transferase center (PTC) maturation. The chain is Dual-action ribosomal maturation protein DarP from Stenotrophomonas maltophilia (strain K279a).